Here is a 74-residue protein sequence, read N- to C-terminus: U3-agatoxin-Ao1d (74 aa).

Residues 1 to 20 (MKAAISLLLLSALLFVVIEA) form the signal peptide. Positions 21–34 (ITYEEGKELFQGER) are excised as a propeptide. 4 cysteine pairs are disulfide-bonded: Cys-37/Cys-53, Cys-44/Cys-58, Cys-52/Cys-68, and Cys-60/Cys-66. The residue at position 72 (Ser-72) is a Serine amide.

Belongs to the neurotoxin 07 (Beta/delta-agtx) family. 02 (aga-3) subfamily. As to expression, expressed by the venom gland.

The protein localises to the secreted. Functionally, insecticidal neurotoxin that induces an irreversible spastic paralysis when injected into insects. Modifies presynaptic voltage-gated sodium channels (Nav), causing them to open at the normal resting potential of the nerve. This leads to spontaneous release of neurotransmitter and repetitive action potentials in motor neurons. In Agelena orientalis (Funnel-web spider), this protein is U3-agatoxin-Ao1d.